Consider the following 215-residue polypeptide: UPF0502 protein YceH (215 aa).

Position 80 is an N6-acetyllysine (Lys80).

This sequence belongs to the UPF0502 family.

The polypeptide is UPF0502 protein YceH (Escherichia coli O157:H7).